We begin with the raw amino-acid sequence, 956 residues long: Glycine dehydrogenase (decarboxylating) (956 aa).

An N6-(pyridoxal phosphate)lysine modification is found at Lys-697.

This sequence belongs to the GcvP family. As to quaternary structure, the glycine cleavage system is composed of four proteins: P, T, L and H. It depends on pyridoxal 5'-phosphate as a cofactor.

It catalyses the reaction N(6)-[(R)-lipoyl]-L-lysyl-[glycine-cleavage complex H protein] + glycine + H(+) = N(6)-[(R)-S(8)-aminomethyldihydrolipoyl]-L-lysyl-[glycine-cleavage complex H protein] + CO2. Its function is as follows. The glycine cleavage system catalyzes the degradation of glycine. The P protein binds the alpha-amino group of glycine through its pyridoxal phosphate cofactor; CO(2) is released and the remaining methylamine moiety is then transferred to the lipoamide cofactor of the H protein. This Cereibacter sphaeroides (strain KD131 / KCTC 12085) (Rhodobacter sphaeroides) protein is Glycine dehydrogenase (decarboxylating).